A 571-amino-acid polypeptide reads, in one-letter code: Probable serine/threonine-protein kinase WNK4 (571 aa).

In terms of domain architecture, Protein kinase spans 19 to 277; it reads GRFAEILGRG…AKELLQDPFL (259 aa). ATP is bound by residues 99 to 102 and Lys-149; that span reads TELF. Asp-166 acts as the Proton acceptor in catalysis. A disordered region spans residues 396 to 425; it reads EDDETPHDHHRHRTDSFHSSSSHASSSQAS. The segment covering 412-425 has biased composition (low complexity); the sequence is FHSSSSHASSSQAS. Residue Ser-522 is modified to Phosphoserine.

Belongs to the protein kinase superfamily. Ser/Thr protein kinase family. WNK subfamily.

It carries out the reaction L-seryl-[protein] + ATP = O-phospho-L-seryl-[protein] + ADP + H(+). It catalyses the reaction L-threonyl-[protein] + ATP = O-phospho-L-threonyl-[protein] + ADP + H(+). In terms of biological role, may regulate flowering time by modulating the photoperiod pathway. This Arabidopsis thaliana (Mouse-ear cress) protein is Probable serine/threonine-protein kinase WNK4 (WNK4).